The following is a 382-amino-acid chain: Succinyl-diaminopimelate desuccinylase (382 aa).

Residue His73 coordinates Zn(2+). Asp75 is an active-site residue. Asp106 serves as a coordination point for Zn(2+). Catalysis depends on Glu140, which acts as the Proton acceptor. Glu141, Glu169, and His355 together coordinate Zn(2+).

It belongs to the peptidase M20A family. DapE subfamily. In terms of assembly, homodimer. Requires Zn(2+) as cofactor. Co(2+) is required as a cofactor.

The enzyme catalyses N-succinyl-(2S,6S)-2,6-diaminopimelate + H2O = (2S,6S)-2,6-diaminopimelate + succinate. The protein operates within amino-acid biosynthesis; L-lysine biosynthesis via DAP pathway; LL-2,6-diaminopimelate from (S)-tetrahydrodipicolinate (succinylase route): step 3/3. Catalyzes the hydrolysis of N-succinyl-L,L-diaminopimelic acid (SDAP), forming succinate and LL-2,6-diaminopimelate (DAP), an intermediate involved in the bacterial biosynthesis of lysine and meso-diaminopimelic acid, an essential component of bacterial cell walls. This chain is Succinyl-diaminopimelate desuccinylase, found in Leptothrix cholodnii (strain ATCC 51168 / LMG 8142 / SP-6) (Leptothrix discophora (strain SP-6)).